We begin with the raw amino-acid sequence, 149 residues long: D-aminoacyl-tRNA deacylase (149 aa).

Positions 137-138 (GP) match the Gly-cisPro motif, important for rejection of L-amino acids motif.

This sequence belongs to the DTD family. As to quaternary structure, homodimer.

Its subcellular location is the cytoplasm. It carries out the reaction glycyl-tRNA(Ala) + H2O = tRNA(Ala) + glycine + H(+). The catalysed reaction is a D-aminoacyl-tRNA + H2O = a tRNA + a D-alpha-amino acid + H(+). An aminoacyl-tRNA editing enzyme that deacylates mischarged D-aminoacyl-tRNAs. Also deacylates mischarged glycyl-tRNA(Ala), protecting cells against glycine mischarging by AlaRS. Acts via tRNA-based rather than protein-based catalysis; rejects L-amino acids rather than detecting D-amino acids in the active site. By recycling D-aminoacyl-tRNA to D-amino acids and free tRNA molecules, this enzyme counteracts the toxicity associated with the formation of D-aminoacyl-tRNA entities in vivo and helps enforce protein L-homochirality. This is D-aminoacyl-tRNA deacylase from Syntrophomonas wolfei subsp. wolfei (strain DSM 2245B / Goettingen).